Here is a 155-residue protein sequence, read N- to C-terminus: S-ribosylhomocysteine lyase (155 aa).

Fe cation-binding residues include His-58, His-62, and Cys-125.

Belongs to the LuxS family. As to quaternary structure, homodimer. Fe cation serves as cofactor.

The catalysed reaction is S-(5-deoxy-D-ribos-5-yl)-L-homocysteine = (S)-4,5-dihydroxypentane-2,3-dione + L-homocysteine. Involved in the synthesis of autoinducer 2 (AI-2) which is secreted by bacteria and is used to communicate both the cell density and the metabolic potential of the environment. The regulation of gene expression in response to changes in cell density is called quorum sensing. Catalyzes the transformation of S-ribosylhomocysteine (RHC) to homocysteine (HC) and 4,5-dihydroxy-2,3-pentadione (DPD). This Helicobacter pylori (strain HPAG1) protein is S-ribosylhomocysteine lyase.